Consider the following 359-residue polypeptide: Growth hormone-regulated TBC protein 1 (359 aa).

Residues 74 to 281 (GIPLEHRARV…RIWDCLFNEG (208 aa)) form the Rab-GAP TBC domain.

In terms of tissue distribution, highly expressed in testes, expression greatly increased at postnatal day 20 and remained high up to day 90. Moderately expressed in kidney and liver, weakly expressed in intestine, lung, ovaries and stomach. Expression of Growth hormone increased the expression in testis but decreased expression in liver and kidney.

Functionally, may act as a GTPase-activating protein for Rab family protein(s). The polypeptide is Growth hormone-regulated TBC protein 1 (Grtp1) (Mus musculus (Mouse)).